The sequence spans 1469 residues: MAPHEKGVNPSESPSGSLKKAPPSGPKALRGFASPSAFRNAGIGNGLLQHRGEDERISFAFPRKGKESLDRNGERPAPMSLESRLGPPVSRFNRPVGGDSLERGNGKGGWDNRDERTSASSSSIHRINKEKIRPRSDFIESSANLYSEDDRNRDRGRYHERDRSRGTNGDRGGGEGHSHREPGRGKEHQNGQGRDRSLYRDHSRERESSRDERDRYSEEYKHQRSKARFSPSPSPERSRLKSSLGRHRSPVSVSSSSSSSARSPPPVQNREPLRYNGSQSKNGEKELSNGLLENSISRSGVSIAVPRKLETKQLVRPSPPHVNLKSTIQDNPSPPTGKYPPSPPSLDILSKPSCNREPLPDQRPPTPPLPENSSPTSPSLESSRFDQNQHLLPDELPLPPLSISFPQKPVSSSSLSRLSSLSAALSRPNPLDKDGTSMPPSFHFREISNRHQRLSPPNNAENQLPETSIIPPPPSETVPEPPWIRPPYIPPPCTKHRPGIGNFFITNLREKVEDKSGKEEKRVDGMEGGKVVQVTDPRLSMTEEQRGRGRGSSKQRAAFYELTYEWDLYSVTPKPPSPPTAVLITGLGPLTTVDQITKFLRPHGRIKEIDSKVDRKTDMQLGICWVKFEGPPLGRPGTAHDVASMAVKVCDGKKISMGGERIRVVLDGRGKRAEQAVKEEMERRYPPKKPSALPSDMKVTPLSGTAMATTSRPPNAPNASTPLIDKQTFDTSAKAPIIRPGVLKPLGQKMYHRPSAPPLVFNNHRFRDESFLNRPFNAGAGMISQQQMGYKILPGKPVQQLASSFTSAPFVRHPRERREDSWTNERGRRLKGESSTRHWRARSLSRSSYSSYSSYSSYSEESEEERPRHPTKVPYPQRKRLATGPSKEDEYKMEDVREAIRENGHPCVFIDAKSLPAAREYESRQSHLGWYILFADDTTAYRVQRVLDTTAVQGHRLSLVVHTSSGPRAQTDASEPVTGGVGESKKGNWRYLTITKKSRPMPAVKKSGKSATIRRKVYSPSVSGSDDDDEQVPVMAQNRKRAPSYASSTSPLSEDDRPFARSVQREERDIDKEGKFSLIGKKADVVSVKAAKGPKSKTIRVDSDEVEENQGVPLASIGEVTKAEGKQDDSTVVKLETLLSESISELTKGKKRPTKAKGGKATKKVRLDQEADDAATKIQIDEDIVPQPPKKKKVVKTEVDKLLASGVLMDEEDAYWLGRVLAAQEDGLEPIWSDGEEDLVDEGHPLFHKSGAWRAEGWKKVAQVQKSRYLPQRNRAVVNSEDVGGITTGRTARLAGRDQHRQTAAVAANNTVESDLFAFNQLRIRKKQLRFARSAIEGYGLYAMETIHAGEMVCEYVGDLVRATVADVREQRYLKQGIGSSYLFRIDNDIVCDATFKGSVSRLINHSCDPSANAKIIKVNGQSKIVIYAERTLYPGEEILYDYKFPLESDPALRVPCLCGAATCRGWLN.

Disordered regions lie at residues 1–478 (MAPH…SETV), 676–699 (AVKEEMERRYPPKKPSALPSDMKV), 805–839 (FTSAPFVRHPRERREDSWTNERGRRLKGESSTRHW), 858–891 (YSEESEEERPRHPTKVPYPQRKRLATGPSKEDEY), 963–984 (TSSGPRAQTDASEPVTGGVGES), and 999–1068 (RPMP…REER). Composition is skewed to basic and acidic residues over residues 64-74 (KGKESLDRNGE), 100-117 (SLERGNGKGGWDNRDERT), 127-138 (INKEKIRPRSDF), 148-165 (EDDRNRDRGRYHERDRSR), and 172-222 (GGGE…EYKH). The segment covering 250-262 (PVSVSSSSSSSAR) has biased composition (low complexity). The segment covering 291–300 (LLENSISRSG) has biased composition (polar residues). 2 stretches are compositionally biased toward pro residues: residues 332 to 344 (PSPPTGKYPPSPP) and 361 to 370 (DQRPPTPPLP). Low complexity-rich tracts occupy residues 371 to 382 (ENSSPTSPSLES) and 411 to 427 (SSSSLSRLSSLSAALSR). The segment covering 455 to 464 (SPPNNAENQL) has biased composition (polar residues). Basic and acidic residues-rich tracts occupy residues 676–685 (AVKEEMERRY) and 816–836 (ERREDSWTNERGRRLKGESST). A compositionally biased stretch (polar residues) spans 963-973 (TSSGPRAQTDA). The span at 1006 to 1017 (KSGKSATIRRKV) shows a compositional bias: basic residues. Residues 1054-1068 (EDDRPFARSVQREER) are compositionally biased toward basic and acidic residues. In terms of domain architecture, SET spans 1327–1444 (KQLRFARSAI…PGEEILYDYK (118 aa)). Tyrosine 1443 lines the S-adenosyl-L-methionine pocket. The Post-SET domain occupies 1453–1469 (LRVPCLCGAATCRGWLN).

The protein belongs to the class V-like SAM-binding methyltransferase superfamily. In terms of assembly, component of the Set1C/COMPASS complex.

The protein resides in the nucleus. The protein localises to the chromosome. The catalysed reaction is L-lysyl(4)-[histone H3] + 3 S-adenosyl-L-methionine = N(6),N(6),N(6)-trimethyl-L-lysyl(4)-[histone H3] + 3 S-adenosyl-L-homocysteine + 3 H(+). It catalyses the reaction N(6)-methyl-L-lysyl(4)-[histone H3] + S-adenosyl-L-methionine = N(6),N(6)-dimethyl-L-lysyl(4)-[histone H3] + S-adenosyl-L-homocysteine + H(+). The enzyme catalyses N(6),N(6)-dimethyl-L-lysyl(4)-[histone H3] + S-adenosyl-L-methionine = N(6),N(6),N(6)-trimethyl-L-lysyl(4)-[histone H3] + S-adenosyl-L-homocysteine + H(+). Its function is as follows. Catalytic component of the COMPASS (Set1C) complex that specifically mono-, di- and trimethylates histone H3 to form H3K4me1/2/3. Binds RNAs which might negatively affect its histone methyltransferase activity. COMPASS recognizes ubiquitinated H2B on one face of the nucleosome which stimulates the methylation of H3 on the opposing face. This is Histone-lysine N-methyltransferase, H3 lysine-4 specific (SET1) from Cryptococcus neoformans var. neoformans serotype D (strain B-3501A) (Filobasidiella neoformans).